The following is a 209-amino-acid chain: Small ribosomal subunit protein uS4 (209 aa).

Positions 22 to 45 (RGRNPLLRKPNPPGQHGMQRKKKS) are disordered. The S4 RNA-binding domain occupies 93 to 154 (CRLDSIVYRL…KSKRLAIVTE (62 aa)).

It belongs to the universal ribosomal protein uS4 family. Part of the 30S ribosomal subunit. Contacts protein S5. The interaction surface between S4 and S5 is involved in control of translational fidelity.

In terms of biological role, one of the primary rRNA binding proteins, it binds directly to 16S rRNA where it nucleates assembly of the body of the 30S subunit. Its function is as follows. With S5 and S12 plays an important role in translational accuracy. This is Small ribosomal subunit protein uS4 from Chlamydia trachomatis serovar L2 (strain ATCC VR-902B / DSM 19102 / 434/Bu).